A 292-amino-acid polypeptide reads, in one-letter code: Protein/nucleic acid deglycase HchA (292 aa).

Residues methionine 1–proline 12 are compositionally biased toward polar residues. The interval methionine 1–phenylalanine 23 is disordered. Residue cysteine 190 is the Nucleophile of the active site.

Belongs to the peptidase C56 family. HchA subfamily.

The protein resides in the cytoplasm. It catalyses the reaction N(omega)-(1-hydroxy-2-oxopropyl)-L-arginyl-[protein] + H2O = lactate + L-arginyl-[protein] + H(+). The catalysed reaction is N(6)-(1-hydroxy-2-oxopropyl)-L-lysyl-[protein] + H2O = lactate + L-lysyl-[protein] + H(+). It carries out the reaction S-(1-hydroxy-2-oxopropyl)-L-cysteinyl-[protein] + H2O = lactate + L-cysteinyl-[protein] + H(+). The enzyme catalyses N(omega)-(1-hydroxy-2-oxoethyl)-L-arginyl-[protein] + H2O = L-arginyl-[protein] + glycolate + H(+). It catalyses the reaction N(6)-(1-hydroxy-2-oxoethyl)-L-lysyl-[protein] + H2O = glycolate + L-lysyl-[protein] + H(+). The catalysed reaction is S-(1-hydroxy-2-oxoethyl)-L-cysteinyl-[protein] + H2O = glycolate + L-cysteinyl-[protein] + H(+). It carries out the reaction N(2)-(1-hydroxy-2-oxopropyl)-dGTP + H2O = lactate + dGTP + H(+). The enzyme catalyses N(2)-(1-hydroxy-2-oxopropyl)-GTP + H2O = lactate + GTP + H(+). It catalyses the reaction N(2)-(1-hydroxy-2-oxopropyl)-GDP + H2O = lactate + GDP + H(+). The catalysed reaction is N(2)-(1-hydroxy-2-oxopropyl)-GMP + H2O = lactate + GMP + H(+). It carries out the reaction N(2)-(1-hydroxy-2-oxoethyl)-dGTP + H2O = dGTP + glycolate + H(+). The enzyme catalyses N(2)-(1-hydroxy-2-oxoethyl)-GTP + H2O = glycolate + GTP + H(+). It catalyses the reaction N(2)-(1-hydroxy-2-oxoethyl)-GDP + H2O = glycolate + GDP + H(+). The catalysed reaction is N(2)-(1-hydroxy-2-oxoethyl)-GMP + H2O = glycolate + GMP + H(+). It carries out the reaction an N(2)-(1-hydroxy-2-oxopropyl)-guanosine in RNA + H2O = a guanosine in RNA + lactate + H(+). The enzyme catalyses an N(2)-(1-hydroxy-2-oxopropyl)-2'-deoxyguanosine in DNA + H2O = a 2'-deoxyguanosine in DNA + lactate + H(+). It catalyses the reaction an N(2)-(1-hydroxy-2-oxoethyl)-guanosine in RNA + H2O = a guanosine in RNA + glycolate + H(+). The catalysed reaction is an N(2)-(1-hydroxy-2-oxoethyl)-2'-deoxyguanosine in DNA + H2O = a 2'-deoxyguanosine in DNA + glycolate + H(+). Its function is as follows. Protein and nucleotide deglycase that catalyzes the deglycation of the Maillard adducts formed between amino groups of proteins or nucleotides and reactive carbonyl groups of glyoxals. Thus, functions as a protein deglycase that repairs methylglyoxal- and glyoxal-glycated proteins, and releases repaired proteins and lactate or glycolate, respectively. Deglycates cysteine, arginine and lysine residues in proteins, and thus reactivates these proteins by reversing glycation by glyoxals. Acts on early glycation intermediates (hemithioacetals and aminocarbinols), preventing the formation of Schiff bases and advanced glycation endproducts (AGE). Also functions as a nucleotide deglycase able to repair glycated guanine in the free nucleotide pool (GTP, GDP, GMP, dGTP) and in DNA and RNA. Is thus involved in a major nucleotide repair system named guanine glycation repair (GG repair), dedicated to reversing methylglyoxal and glyoxal damage via nucleotide sanitization and direct nucleic acid repair. Plays an important role in protecting cells from carbonyl stress. The polypeptide is Protein/nucleic acid deglycase HchA (Staphylococcus aureus (strain bovine RF122 / ET3-1)).